The chain runs to 508 residues: Protein disulfide-isomerase (508 aa).

Positions 1–17 (MLRRALLCLAVAALVRA) are cleaved as a signal peptide. The 117-residue stretch at 18–134 (DAPEEEDHVL…IVNWLKKRTG (117 aa)) folds into the Thioredoxin 1 domain. Catalysis depends on nucleophile residues cysteine 53 and cysteine 56. A disulfide bridge connects residues cysteine 53 and cysteine 56. Lysine 200 carries the post-translational modification N6-acetyllysine. Lysine 222 and lysine 271 each carry N6-succinyllysine. Phosphoserine is present on serine 331. A Thioredoxin 2 domain is found at 349–475 (GKIKPHLMSQ…FKKFLESGGQ (127 aa)). A Phosphoserine; by FAM20C modification is found at serine 357. Active-site nucleophile residues include cysteine 397 and cysteine 400. A disulfide bridge connects residues cysteine 397 and cysteine 400. Serine 427 is subject to Phosphoserine. Residues 471–508 (ESGGQDGAGDDDDLEDLEEAEEPDMEEDDDQKAVKDEL) form a disordered region. Acidic residues predominate over residues 478-500 (AGDDDDLEDLEEAEEPDMEEDDD). The short motif at 505–508 (KDEL) is the Prevents secretion from ER element.

It belongs to the protein disulfide isomerase family. In terms of assembly, heterodimer; heterodimerizes with the protein microsomal triglyceride transfer MTTP. Homodimer. Monomers and homotetramers may also occur. Interacts with P4HA2, forming a heterotetramer consisting of 2 alpha subunits (P4HA2) and 2 beta (P4HB), where P4HB plays the role of a structural subunit; this tetramer catalyzes the formation of 4-hydroxyproline in collagen. Also constitutes the structural subunit of the microsomal triacylglycerol transfer protein MTTP in mammalian cells. Stabilizes both enzymes and retain them in the ER without contributing to the catalytic activity. Binds UBQLN1. Interacts with ERO1B. Binds to CD4, and upon HIV-1 binding to the cell membrane, is part of a P4HB/PDI-CD4-CXCR4-gp120 complex. Interacts with ILDR2. Interacts with ERN1/IRE1A (via N-terminus); the interaction is enhanced by phosphorylation of P4HB by FAM20C in response to endoplasmic reticulum stress and results in attenuation of ERN1 activity. Post-translationally, phosphorylation of Ser-357 by FAM20C is induced by endoplasmic reticulum stress and results in a functional switch from oxidoreductase to molecular chaperone. It also promotes interaction with ERN1.

The protein localises to the endoplasmic reticulum. The protein resides in the endoplasmic reticulum lumen. Its subcellular location is the melanosome. It localises to the cell membrane. It carries out the reaction Catalyzes the rearrangement of -S-S- bonds in proteins.. This multifunctional protein catalyzes the formation, breakage and rearrangement of disulfide bonds. At the cell surface, seems to act as a reductase that cleaves disulfide bonds of proteins attached to the cell. May therefore cause structural modifications of exofacial proteins. Inside the cell, seems to form/rearrange disulfide bonds of nascent proteins. At high concentrations and following phosphorylation by FAM20C, functions as a chaperone that inhibits aggregation of misfolded proteins. At low concentrations, facilitates aggregation (anti-chaperone activity). May be involved with other chaperones in the structural modification of the TG precursor in hormone biogenesis. Also acts as a structural subunit of various enzymes such as prolyl 4-hydroxylase and microsomal triacylglycerol transfer protein MTTP. Receptor for LGALS9; the interaction retains P4HB at the cell surface of Th2 T helper cells, increasing disulfide reductase activity at the plasma membrane, altering the plasma membrane redox state and enhancing cell migration. The sequence is that of Protein disulfide-isomerase (P4HB) from Homo sapiens (Human).